The chain runs to 201 residues: Molybdenum cofactor guanylyltransferase (201 aa).

GTP contacts are provided by residues 14–16, lysine 31, and aspartate 104; that span reads LAG. Residue aspartate 104 coordinates Mg(2+).

The protein belongs to the MobA family. Monomer. The cofactor is Mg(2+).

The protein localises to the cytoplasm. It catalyses the reaction Mo-molybdopterin + GTP + H(+) = Mo-molybdopterin guanine dinucleotide + diphosphate. Transfers a GMP moiety from GTP to Mo-molybdopterin (Mo-MPT) cofactor (Moco or molybdenum cofactor) to form Mo-molybdopterin guanine dinucleotide (Mo-MGD) cofactor. The protein is Molybdenum cofactor guanylyltransferase of Helicobacter pylori (strain ATCC 700392 / 26695) (Campylobacter pylori).